Here is a 260-residue protein sequence, read N- to C-terminus: Carbonic anhydrase 3 (260 aa).

The residue at position 2 (Ala2) is an N-acetylalanine. Residues 3 to 259 (KEWGYADHNG…LKGRVVRASF (257 aa)) form the Alpha-carbonic anhydrase domain. Residues Ser29, Ser43, Ser50, and Ser55 each carry the phosphoserine modification. The segment at 64-67 (RTCR) is involved in proton transfer. The residue at position 73 (Thr73) is a Phosphothreonine. 3 residues coordinate Zn(2+): His94, His96, and His119. Phosphotyrosine is present on Tyr127. Phosphothreonine occurs at positions 129 and 176. An S-glutathionyl cysteine mark is found at Cys182 and Cys187. Substrate is bound at residue 198–199 (TT). Thr216 carries the phosphothreonine modification. At Ser219 the chain carries Phosphoserine.

It belongs to the alpha-carbonic anhydrase family. Requires Zn(2+) as cofactor. S-thiolated both by thiol-disulfide exchange with glutathione disulfide and by oxyradical-initiated S-thiolation with reduced glutathione. Post-translationally, S-glutathionylated in hepatocytes under oxidative stress.

The protein resides in the cytoplasm. The catalysed reaction is hydrogencarbonate + H(+) = CO2 + H2O. Its activity is regulated as follows. Inhibited by acetazolamide. Its function is as follows. Reversible hydration of carbon dioxide. The sequence is that of Carbonic anhydrase 3 (CA3) from Equus caballus (Horse).